We begin with the raw amino-acid sequence, 207 residues long: Probable mediator of RNA polymerase II transcription subunit 19b (207 aa).

The disordered stretch occupies residues 99–207; the sequence is DTAPVELPPA…SSKLDEMGAM (109 aa). A compositionally biased stretch (basic residues) spans 127–152; sequence DRKHRKHKDKKEKDREHKKHKHKHKD. Positions 153–167 are enriched in basic and acidic residues; sequence RIKDKDKDKDRDKKK. Residues 168 to 179 are compositionally biased toward basic residues; sequence EKSGHHDKKRKN.

Belongs to the plant Mediator complex subunit 19 family. Component of the Mediator complex.

The protein resides in the nucleus. In terms of biological role, component of the Mediator complex, a coactivator involved in the regulated transcription of nearly all RNA polymerase II-dependent genes. Mediator functions as a bridge to convey information from gene-specific regulatory proteins to the basal RNA polymerase II transcription machinery. The Mediator complex, having a compact conformation in its free form, is recruited to promoters by direct interactions with regulatory proteins and serves for the assembly of a functional preinitiation complex with RNA polymerase II and the general transcription factors. The chain is Probable mediator of RNA polymerase II transcription subunit 19b (MED19B) from Arabidopsis thaliana (Mouse-ear cress).